The primary structure comprises 607 residues: Thymidine kinase (607 aa).

Disordered stretches follow at residues 1-160 and 180-215; these read MAGF…ADST and DDKSDCESEDESNFRRPSSHSALKQKNGGKGKPSGL. The span at 17 to 32 shows a compositional bias: basic and acidic residues; sequence KCQEDESPENERHENF. 3 stretches are compositionally biased toward polar residues: residues 88-106, 148-160, and 194-203; these read AAVTSNTGNSPGSRHTSCP, RKTSCTEGGADST, and RRPSSHSALK. 291–298 contacts ATP; the sequence is GAPGVGKT. Glu317 functions as the Proton acceptor in the catalytic mechanism. Substrate is bound at residue Gln355. Arg445 lines the ATP pocket. A substrate-binding site is contributed by Arg451.

This sequence belongs to the herpesviridae thymidine kinase family. As to quaternary structure, homodimer.

It is found in the virion tegument. The protein localises to the host nucleus. It carries out the reaction thymidine + ATP = dTMP + ADP + H(+). Its function is as follows. Catalyzes the transfer of the gamma-phospho group of ATP to thymidine to generate dTMP in the salvage pathway of pyrimidine synthesis. The dTMP serves as a substrate for DNA polymerase during viral DNA replication. Allows the virus to be reactivated and to grow in non-proliferative cells lacking a high concentration of phosphorylated nucleic acid precursors. This Homo sapiens (Human) protein is Thymidine kinase.